We begin with the raw amino-acid sequence, 182 residues long: uncharacterized protein (182 aa).

The interval 40-182 (LLKTDDDDDD…EEIQRNQKGN (143 aa)) is disordered. The segment covering 52 to 86 (NNININNNNATITTTSTTTTTTTTSTTKTFTISTD) has biased composition (low complexity). A compositionally biased stretch (acidic residues) spans 87–100 (NYDEDVNDDQDEGD). Low complexity-rich tracts occupy residues 104 to 134 (NNNN…NNNN) and 148 to 157 (DLDFNNQNNN). Positions 165 to 182 (FLSKDDNIEEIQRNQKGN) are enriched in basic and acidic residues.

This is an uncharacterized protein from Dictyostelium discoideum (Social amoeba).